Reading from the N-terminus, the 34-residue chain is Thermomycolin (34 aa).

Ser-33 functions as the Charge relay system in the catalytic mechanism.

This sequence belongs to the peptidase S8 family.

The protein localises to the secreted. It catalyses the reaction Rather non-specific hydrolysis of proteins. Preferential cleavage: -Ala-|-Xaa-, -Tyr-|-Xaa-, -Phe-|-Xaa- in small molecular substrates.. In terms of biological role, this is an extracellular proteinase with a general specificity for apolar residues. This Malbranchea cinnamomea (Thermophilic fungus) protein is Thermomycolin.